Here is a 412-residue protein sequence, read N- to C-terminus: Gamma-glutamyl phosphate reductase (412 aa).

It belongs to the gamma-glutamyl phosphate reductase family.

It localises to the cytoplasm. It catalyses the reaction L-glutamate 5-semialdehyde + phosphate + NADP(+) = L-glutamyl 5-phosphate + NADPH + H(+). It functions in the pathway amino-acid biosynthesis; L-proline biosynthesis; L-glutamate 5-semialdehyde from L-glutamate: step 2/2. Its function is as follows. Catalyzes the NADPH-dependent reduction of L-glutamate 5-phosphate into L-glutamate 5-semialdehyde and phosphate. The product spontaneously undergoes cyclization to form 1-pyrroline-5-carboxylate. This Actinobacillus pleuropneumoniae serotype 3 (strain JL03) protein is Gamma-glutamyl phosphate reductase.